A 770-amino-acid chain; its full sequence is Arf-GAP with coiled-coil, ANK repeat and PH domain-containing protein 2 (770 aa).

One can recognise a BAR domain in the interval 6 to 226; the sequence is DFEECLKDSP…MKDLGAQLDR (221 aa). In terms of domain architecture, PH spans 266 to 361; sequence GIVMEGYLFK…WIKAVQTSIA (96 aa). The segment at 371–392 is disordered; it reads SEKLDKKSSPSTGSLDSGSESK. Low complexity predominate over residues 379–388; that stretch reads SPSTGSLDSG. A phosphoserine mark is found at serine 384 and serine 387. The region spanning 399 to 520 is the Arf-GAP domain; the sequence is ESALQRVQCI…KFVDKYSTLL (122 aa). The C4-type zinc-finger motif lies at 414-437; the sequence is CCDCGLADPRWASINLGITLCIEC. Position 521 is a phosphoserine (serine 521). Polar residues predominate over residues 548 to 561; that stretch reads TPVKSNDSGIQQCS. Residues 548-571 form a disordered region; the sequence is TPVKSNDSGIQQCSDDGRESLPST. 2 positions are modified to phosphoserine: serine 573 and serine 576. 3 ANK repeats span residues 632–661, 665–694, and 698–727; these read NQAT…NVNQ, QGRG…NQHA, and EGKD…NEEM. Tyrosine 734 carries the phosphotyrosine modification. Phosphoserine is present on serine 767.

In terms of assembly, interacts with RAB35 (GTP-bound form); the interaction is direct and probably recruits ACAP2 to membranes. Interacts with MICALL1; the interaction is indirect through RAB35.

It is found in the endosome membrane. The protein resides in the cell membrane. With respect to regulation, GAP activity stimulated by phosphatidylinositol 4,5-bisphosphate (PIP2) and phosphatidic acid. In terms of biological role, GTPase-activating protein (GAP) for ADP ribosylation factor 6 (ARF6). Doesn't show GAP activity for RAB35. The sequence is that of Arf-GAP with coiled-coil, ANK repeat and PH domain-containing protein 2 (Acap2) from Rattus norvegicus (Rat).